The chain runs to 200 residues: LexA repressor (200 aa).

A DNA-binding region (H-T-H motif) is located at residues 29 to 48 (IRDIARAFRITPRGAIVHLN). Active-site for autocatalytic cleavage activity residues include Ser120 and Lys158.

It belongs to the peptidase S24 family. As to quaternary structure, homodimer.

It carries out the reaction Hydrolysis of Ala-|-Gly bond in repressor LexA.. In terms of biological role, represses a number of genes involved in the response to DNA damage (SOS response), including recA and lexA. In the presence of single-stranded DNA, RecA interacts with LexA causing an autocatalytic cleavage which disrupts the DNA-binding part of LexA, leading to derepression of the SOS regulon and eventually DNA repair. The chain is LexA repressor from Pseudothermotoga lettingae (strain ATCC BAA-301 / DSM 14385 / NBRC 107922 / TMO) (Thermotoga lettingae).